Consider the following 394-residue polypeptide: uncharacterized protein (394 aa).

The protein belongs to the mycobacterial PPE family.

This is an uncharacterized protein from Mycobacterium tuberculosis (strain CDC 1551 / Oshkosh).